The primary structure comprises 179 residues: ATP-dependent protease subunit HslV (179 aa).

Residue threonine 7 is part of the active site. The Na(+) site is built by glycine 162, cysteine 165, and threonine 168.

Belongs to the peptidase T1B family. HslV subfamily. A double ring-shaped homohexamer of HslV is capped on each side by a ring-shaped HslU homohexamer. The assembly of the HslU/HslV complex is dependent on binding of ATP.

The protein resides in the cytoplasm. It carries out the reaction ATP-dependent cleavage of peptide bonds with broad specificity.. Its activity is regulated as follows. Allosterically activated by HslU binding. Its function is as follows. Protease subunit of a proteasome-like degradation complex believed to be a general protein degrading machinery. The chain is ATP-dependent protease subunit HslV from Bordetella avium (strain 197N).